A 200-amino-acid polypeptide reads, in one-letter code: SKP1-like protein 19 (200 aa).

Residues 67–92 are compositionally biased toward basic and acidic residues; that stretch reads DDVVETHESSTKGDKTVEEAKKKPDD. The segment at 67–109 is disordered; sequence DDVVETHESSTKGDKTVEEAKKKPDDVAVPESTEGDDEAEDKK. The interaction with the F-box domain of F-box proteins stretch occupies residues 132–190; that stretch reads ILAANYLNVQGLFDLCSKTIADYIKDMTPEEVRELFNIENDFTPEEEEAIRNENAWTFE.

Belongs to the SKP1 family. Part of a SCF (SKP1-cullin-F-box) protein ligase complex. Interacts with CPR1/CPR30. In terms of tissue distribution, expressed in leaves and flowers.

Its subcellular location is the nucleus. It participates in protein modification; protein ubiquitination. In terms of biological role, involved in ubiquitination and subsequent proteasomal degradation of target proteins. Together with CUL1, RBX1 and a F-box protein, it forms a SCF E3 ubiquitin ligase complex. The functional specificity of this complex depends on the type of F-box protein. In the SCF complex, it serves as an adapter that links the F-box protein to CUL1. This Arabidopsis thaliana (Mouse-ear cress) protein is SKP1-like protein 19 (ASK19).